The following is a 270-amino-acid chain: uncharacterized protein (270 aa).

Over residues 1–10 (MFGLKVKDAT) the composition is skewed to basic and acidic residues. Disordered stretches follow at residues 1-115 (MFGL…PTPW) and 215-236 (QTGF…QGEQ). Composition is skewed to low complexity over residues 26–41 (SSSS…TQRG) and 98–113 (GTSP…GTPT).

The protein belongs to the adhesin P1 family.

This is an uncharacterized protein from Mycoplasma pneumoniae (strain ATCC 29342 / M129 / Subtype 1) (Mycoplasmoides pneumoniae).